The chain runs to 113 residues: Photosystem II reaction center Psb28 protein (113 aa).

This sequence belongs to the Psb28 family. Part of the photosystem II complex.

Its subcellular location is the cellular thylakoid membrane. This Trichodesmium erythraeum (strain IMS101) protein is Photosystem II reaction center Psb28 protein.